A 244-amino-acid polypeptide reads, in one-letter code: MTVGLYLYGIFPEPIPDGLVLQGIDNEPVHSEMIDGFSFLYSAAHKEKYLASRRYLICHEKVLETVMEAGFTTLLPLRFGLVIKTWESVTEQLITPYKTQLKELFAKLSGQREVSIKIFWDNQWELQAALESNPKLKQERDAMMGKNLNMEEIIHIGQLIEATVLRRKQDIIQVFRDQLNHRAQEVIESDPMTDDMIYNAAYLIPWEQEPEFSQNVEAIDQQFGDRLRIRYNNLTAPYTFAQLI.

The N-terminus stretch occupies residues 1 to 109 (MTVGLYLYGI…QLKELFAKLS (109 aa)). The segment at 110-233 (GQREVSIKIF…GDRLRIRYNN (124 aa)) is C-terminus, modifed ferredoxin fold. The C-tail stretch occupies residues 234–244 (LTAPYTFAQLI).

This sequence belongs to the gas vesicle GvpF/GvpL family. Binds GvpA.

The protein localises to the gas vesicle. A minor component of the gas vesicle, may be involved in preventing GvpA aggregation during gas vesicle nucleation. Gas vesicles (GV) are hollow, gas filled proteinaceous nanostructures. During planktonic growth they allow positioning of the organism at a favorable depth for light or nutrient acquisition. In Microcystis aeruginosa (strain PCC 7806), this protein is Gas vesicle protein F.